The chain runs to 212 residues: Protein-L-isoaspartate O-methyltransferase (212 aa).

Serine 60 is an active-site residue.

This sequence belongs to the methyltransferase superfamily. L-isoaspartyl/D-aspartyl protein methyltransferase family.

It localises to the cytoplasm. The catalysed reaction is [protein]-L-isoaspartate + S-adenosyl-L-methionine = [protein]-L-isoaspartate alpha-methyl ester + S-adenosyl-L-homocysteine. Its function is as follows. Catalyzes the methyl esterification of L-isoaspartyl residues in peptides and proteins that result from spontaneous decomposition of normal L-aspartyl and L-asparaginyl residues. It plays a role in the repair and/or degradation of damaged proteins. This chain is Protein-L-isoaspartate O-methyltransferase, found in Methylorubrum populi (strain ATCC BAA-705 / NCIMB 13946 / BJ001) (Methylobacterium populi).